Reading from the N-terminus, the 363-residue chain is tRNA(Met) cytidine acetate ligase (363 aa).

Residues Ile-7–Leu-20, Gly-96, Asn-152, and Arg-175 each bind ATP.

The protein belongs to the TmcAL family.

Its subcellular location is the cytoplasm. It carries out the reaction cytidine(34) in elongator tRNA(Met) + acetate + ATP = N(4)-acetylcytidine(34) in elongator tRNA(Met) + AMP + diphosphate. Functionally, catalyzes the formation of N(4)-acetylcytidine (ac(4)C) at the wobble position of elongator tRNA(Met), using acetate and ATP as substrates. First activates an acetate ion to form acetyladenylate (Ac-AMP) and then transfers the acetyl group to tRNA to form ac(4)C34. The protein is tRNA(Met) cytidine acetate ligase of Streptococcus thermophilus (strain ATCC BAA-250 / LMG 18311).